We begin with the raw amino-acid sequence, 442 residues long: Chromosomal replication initiator protein DnaA (442 aa).

Residues 1–84 (MSVLWSHCIS…LEIGSRAAEA (84 aa)) form a domain I, interacts with DnaA modulators region. The segment at 84–105 (AAQMRSANPPRKTAPARKQVPN) is domain II. The segment at 106–322 (NLNSAFIFGN…GALRRVIANA (217 aa)) is domain III, AAA+ region. The ATP site is built by glycine 150, glycine 152, lysine 153, and threonine 154. The segment at 323–442 (QFTGRPITLE…FSNLLRILSN (120 aa)) is domain IV, binds dsDNA.

Belongs to the DnaA family. Oligomerizes as a right-handed, spiral filament on DNA at oriC.

It localises to the cytoplasm. In terms of biological role, plays an essential role in the initiation and regulation of chromosomal replication. ATP-DnaA binds to the origin of replication (oriC) to initiate formation of the DNA replication initiation complex once per cell cycle. Binds the DnaA box (a 9 base pair repeat at the origin) and separates the double-stranded (ds)DNA. Forms a right-handed helical filament on oriC DNA; dsDNA binds to the exterior of the filament while single-stranded (ss)DNA is stabiized in the filament's interior. The ATP-DnaA-oriC complex binds and stabilizes one strand of the AT-rich DNA unwinding element (DUE), permitting loading of DNA polymerase. After initiation quickly degrades to an ADP-DnaA complex that is not apt for DNA replication. Binds acidic phospholipids. The polypeptide is Chromosomal replication initiator protein DnaA (Methylococcus capsulatus (strain ATCC 33009 / NCIMB 11132 / Bath)).